The following is a 5098-amino-acid chain: Malformin synthetase mlfA (5098 aa).

The segment at 225-616 (ERHAANRPHS…CGRADTQVKL (392 aa)) is adenylation 1. One can recognise a Carrier 1 domain in the interval 756 to 829 (SRLEQEIQLA…EAASLAKVQE (74 aa)). At Ser790 the chain carries O-(pantetheine 4'-phosphoryl)serine. Residues 867–1298 (EDVFPCTTMQ…ALDSLTLLQA (432 aa)) form a condensation 1 region. The interval 1326-1715 (DGWVTRQPES…GRKDTQVKLR (390 aa)) is adenylation 2. In terms of domain architecture, Carrier 2 spans 1853 to 1930 (TAASELERTL…QLAAEFGEPA (78 aa)). Position 1890 is an O-(pantetheine 4'-phosphoryl)serine (Ser1890). 2 disordered regions span residues 1930–1960 (AGQSASSASSTTEEGFTFSTPDDSSTNDGVD) and 1993–2022 (GSSSSSKTPSGSSSSSSSSSRKKKSARVVS). Composition is skewed to low complexity over residues 1933-1957 (SASSASSTTEEGFTFSTPDDSSTND) and 1993-2011 (GSSSSSKTPSGSSSSSSSS). Residues 2063–2478 (EDIYPATALQ…ALSHSDRQTL (416 aa)) are condensation 2. Residues 2501-2893 (VRTPHAPAVC…IGRRDGQLKL (393 aa)) form an adenylation 3 region. Residues 3029-3105 (RPVTAQEREM…QLMRHLSATR (77 aa)) form the Carrier 3 domain. An O-(pantetheine 4'-phosphoryl)serine modification is found at Ser3066. Condensation stretches follow at residues 3122–3587 (WVAL…TYDQ) and 3608–4027 (NIYP…EQLM). An adenylation 4 region spans residues 4052-4442 (HASREAVCAW…VGRKDNQIKF (391 aa)). One can recognise a Carrier 4 domain in the interval 4576–4652 (MPSTAAERKM…DLAYRTTNLV (77 aa)). Ser4613 carries the post-translational modification O-(pantetheine 4'-phosphoryl)serine. Residues 4689 to 5016 (DVLPTTSFQR…LQTIVQHQNN (328 aa)) form a condensation 5 region.

This sequence belongs to the NRP synthetase family.

It functions in the pathway secondary metabolite biosynthesis. Nonribosomal peptide synthetase; part of the gene cluster that mediates the biosynthesis of malformins, cyclic pentapeptides with a disulfide bond between 2 consecutive cysteins, that show potential anti-tumor as well as antimalarial and antitrypanosomal properties. The nonribosomal peptide synthetase mlfA is responsible of the formation of the cyclic pentapeptide. The malformin biosynthesis clusters in malformin-producing fungi also contain enzymes involved in the formation of the disulfide bond between the two consecutive cysteins within malformins, in addition to additional tailoring enzymes such as methyltransferases or oxidoreductases. They are also composed of up to 4 major facilitator superfamily transporters, and transcription factors probably involved in the regulation of the expression of those clusters. This Aspergillus homomorphus (strain CBS 101889) protein is Malformin synthetase mlfA.